The primary structure comprises 129 residues: MGKAKAERRLKDNEAQAVARTIRVSPQKLNLVAALIRGKKVDRALAELEFSRKRIAGTVKKTLESAIANAENNHDLDVDSLIVAEAFVGKSIVMKRFHARGRGRASRVEKPFAHLTIVVREVEAKGEAA.

The protein belongs to the universal ribosomal protein uL22 family. In terms of assembly, part of the 50S ribosomal subunit.

Functionally, this protein binds specifically to 23S rRNA; its binding is stimulated by other ribosomal proteins, e.g. L4, L17, and L20. It is important during the early stages of 50S assembly. It makes multiple contacts with different domains of the 23S rRNA in the assembled 50S subunit and ribosome. The globular domain of the protein is located near the polypeptide exit tunnel on the outside of the subunit, while an extended beta-hairpin is found that lines the wall of the exit tunnel in the center of the 70S ribosome. The chain is Large ribosomal subunit protein uL22 from Rhizobium meliloti (strain 1021) (Ensifer meliloti).